A 337-amino-acid polypeptide reads, in one-letter code: Membrane-spanning 4-domains subfamily A member 18 (337 aa).

The tract at residues 101–121 (LGTTDLQTQPGGPQNPPTCAP) is disordered. Transmembrane regions (helical) follow at residues 155-175 (LGAIQILIGLTHIFTAINPSL), 183-203 (AISGYLVWGGIFFIISGSLSV), 220-240 (MNVVSAIVSLAGVLLLLVDLI), and 252-272 (GGLLPFVLLEFCLTCVVSHFG).

This sequence belongs to the MS4A family.

The protein localises to the membrane. The polypeptide is Membrane-spanning 4-domains subfamily A member 18 (MS4A18) (Bos taurus (Bovine)).